Here is a 506-residue protein sequence, read N- to C-terminus: Anaerobic nitric oxide reductase transcription regulator NorR (506 aa).

Asp57 carries the post-translational modification 4-aspartylphosphate. Residues Met187 to Val416 form the Sigma-54 factor interaction domain. ATP contacts are provided by residues Gly215–Glu222 and Ala278–Glu287. The segment at residues Trp481–Lys500 is a DNA-binding region (H-T-H motif).

It participates in nitrogen metabolism; nitric oxide reduction. Its function is as follows. Required for the expression of anaerobic nitric oxide (NO) reductase, acts as a transcriptional activator for at least the norVW operon. Activation also requires sigma-54. The chain is Anaerobic nitric oxide reductase transcription regulator NorR from Salmonella heidelberg (strain SL476).